We begin with the raw amino-acid sequence, 299 residues long: HTH-type transcriptional regulator CysL (299 aa).

The HTH lysR-type domain occupies 1–58 (MYYDVLKTFIAVVEEKNFTKAAEKLMISQPSVSLHIKNLEKEFQTALLNRSPKHFTTT). The segment at residues 18–37 (FTKAAEKLMISQPSVSLHIK) is a DNA-binding region (H-T-H motif).

This sequence belongs to the LysR transcriptional regulatory family.

In terms of biological role, transcriptional activator of the cysJI operon which is involved in sulfur assimilation. Also negatively regulates its own transcription. The sequence is that of HTH-type transcriptional regulator CysL (cysL) from Bacillus subtilis (strain 168).